The following is a 450-amino-acid chain: Bifunctional protein GlmU (450 aa).

A pyrophosphorylase region spans residues 1–229 (MRRHAIILAA…VEEIMGVNDR (229 aa)). Residues 8–11 (LAAG), Lys22, Gln72, and 77–78 (GT) each bind UDP-N-acetyl-alpha-D-glucosamine. Asp102 lines the Mg(2+) pocket. Residues Gly139, Glu154, and Asn227 each coordinate UDP-N-acetyl-alpha-D-glucosamine. Asn227 serves as a coordination point for Mg(2+). Residues 230–250 (VMLSQAENAMQRRTNHYHMLN) form a linker region. The tract at residues 251–450 (GVTIIDPDST…RQTTKEGYRK (200 aa)) is N-acetyltransferase. Residues Arg332 and Lys350 each coordinate UDP-N-acetyl-alpha-D-glucosamine. His362 serves as the catalytic Proton acceptor. The UDP-N-acetyl-alpha-D-glucosamine site is built by Tyr365 and Asn376. Residues 385-386 (NY), Ala422, and Arg439 each bind acetyl-CoA.

The protein in the N-terminal section; belongs to the N-acetylglucosamine-1-phosphate uridyltransferase family. In the C-terminal section; belongs to the transferase hexapeptide repeat family. In terms of assembly, homotrimer. Requires Mg(2+) as cofactor.

It localises to the cytoplasm. It catalyses the reaction alpha-D-glucosamine 1-phosphate + acetyl-CoA = N-acetyl-alpha-D-glucosamine 1-phosphate + CoA + H(+). The catalysed reaction is N-acetyl-alpha-D-glucosamine 1-phosphate + UTP + H(+) = UDP-N-acetyl-alpha-D-glucosamine + diphosphate. Its pathway is nucleotide-sugar biosynthesis; UDP-N-acetyl-alpha-D-glucosamine biosynthesis; N-acetyl-alpha-D-glucosamine 1-phosphate from alpha-D-glucosamine 6-phosphate (route II): step 2/2. It participates in nucleotide-sugar biosynthesis; UDP-N-acetyl-alpha-D-glucosamine biosynthesis; UDP-N-acetyl-alpha-D-glucosamine from N-acetyl-alpha-D-glucosamine 1-phosphate: step 1/1. The protein operates within bacterial outer membrane biogenesis; LPS lipid A biosynthesis. Catalyzes the last two sequential reactions in the de novo biosynthetic pathway for UDP-N-acetylglucosamine (UDP-GlcNAc). The C-terminal domain catalyzes the transfer of acetyl group from acetyl coenzyme A to glucosamine-1-phosphate (GlcN-1-P) to produce N-acetylglucosamine-1-phosphate (GlcNAc-1-P), which is converted into UDP-GlcNAc by the transfer of uridine 5-monophosphate (from uridine 5-triphosphate), a reaction catalyzed by the N-terminal domain. The chain is Bifunctional protein GlmU from Staphylococcus aureus (strain MRSA252).